Consider the following 430-residue polypeptide: uncharacterized protein (430 aa).

Transmembrane regions (helical) follow at residues 36 to 56 (LFVV…GVTV), 69 to 89 (AFAG…ALIV), 100 to 122 (TGLS…AAII), 126 to 148 (FLLF…ARYA), 160 to 180 (TAVS…PSLV), 197 to 217 (GPFI…FIML), 253 to 273 (IIVG…IMTM), 285 to 305 (LGAV…PSLV), 317 to 337 (AMAI…AFAP), 340 to 360 (SMIL…FGLI), 384 to 404 (VLIA…VAGS), and 406 to 426 (YLAL…VVVW).

It belongs to the major facilitator superfamily.

It localises to the cell membrane. This is an uncharacterized protein from Bacillus subtilis (strain 168).